The primary structure comprises 80 residues: Adipogenin (80 aa).

The chain crosses the membrane as a helical span at residues 16-36; that stretch reads FLVFWLCLPVALLLFLTIVWL. Phosphoserine is present on serine 63.

The protein belongs to the adipogenin family. As to expression, selectively expressed in adipose tissue where it is particularly enriched in brown adipose tissue. In adipose tissue, expressed exclusively in adipocytes and not in the stromal-vascular cell population. Expressed at much lower levels in heart, stomach and muscle and barely detected in kidney and lung.

The protein resides in the membrane. Its subcellular location is the nucleus. Plays a role in stimulating adipocyte differentiation and development. The sequence is that of Adipogenin (Adig) from Mus musculus (Mouse).